Consider the following 143-residue polypeptide: Transcriptional regulator MraZ (143 aa).

SpoVT-AbrB domains lie at S5–E47 and A76–R119.

The protein belongs to the MraZ family. As to quaternary structure, forms oligomers.

The protein resides in the cytoplasm. Its subcellular location is the nucleoid. The chain is Transcriptional regulator MraZ from Parafrankia sp. (strain EAN1pec).